A 331-amino-acid polypeptide reads, in one-letter code: Holliday junction branch migration complex subunit RuvB (331 aa).

The interval Met1–Tyr186 is large ATPase domain (RuvB-L). Residues Ile25, Arg26, Gly67, Lys70, Thr71, Thr72, Glu133–Phe135, Arg176, Tyr186, and Arg223 each bind ATP. Thr71 contributes to the Mg(2+) binding site. A small ATPAse domain (RuvB-S) region spans residues Asn187–Ala257. The head domain (RuvB-H) stretch occupies residues Arg260–Val331. DNA contacts are provided by Arg296, Arg315, and Arg320.

It belongs to the RuvB family. As to quaternary structure, homohexamer. Forms an RuvA(8)-RuvB(12)-Holliday junction (HJ) complex. HJ DNA is sandwiched between 2 RuvA tetramers; dsDNA enters through RuvA and exits via RuvB. An RuvB hexamer assembles on each DNA strand where it exits the tetramer. Each RuvB hexamer is contacted by two RuvA subunits (via domain III) on 2 adjacent RuvB subunits; this complex drives branch migration. In the full resolvosome a probable DNA-RuvA(4)-RuvB(12)-RuvC(2) complex forms which resolves the HJ.

The protein localises to the cytoplasm. It carries out the reaction ATP + H2O = ADP + phosphate + H(+). The RuvA-RuvB-RuvC complex processes Holliday junction (HJ) DNA during genetic recombination and DNA repair, while the RuvA-RuvB complex plays an important role in the rescue of blocked DNA replication forks via replication fork reversal (RFR). RuvA specifically binds to HJ cruciform DNA, conferring on it an open structure. The RuvB hexamer acts as an ATP-dependent pump, pulling dsDNA into and through the RuvAB complex. RuvB forms 2 homohexamers on either side of HJ DNA bound by 1 or 2 RuvA tetramers; 4 subunits per hexamer contact DNA at a time. Coordinated motions by a converter formed by DNA-disengaged RuvB subunits stimulates ATP hydrolysis and nucleotide exchange. Immobilization of the converter enables RuvB to convert the ATP-contained energy into a lever motion, pulling 2 nucleotides of DNA out of the RuvA tetramer per ATP hydrolyzed, thus driving DNA branch migration. The RuvB motors rotate together with the DNA substrate, which together with the progressing nucleotide cycle form the mechanistic basis for DNA recombination by continuous HJ branch migration. Branch migration allows RuvC to scan DNA until it finds its consensus sequence, where it cleaves and resolves cruciform DNA. The sequence is that of Holliday junction branch migration complex subunit RuvB from Psychrobacter arcticus (strain DSM 17307 / VKM B-2377 / 273-4).